The sequence spans 512 residues: Calcium-dependent protein kinase 18 (512 aa).

The disordered stretch occupies residues 1 to 25; that stretch reads MGLCSSSSARRDAGTPGGGNGAGNK. The N-myristoyl glycine moiety is linked to residue Gly2. The Protein kinase domain maps to 52–312; it reads YALGKLLGHG…AAQALSHEWV (261 aa). Residues 58–66 and Lys81 each bind ATP; that span reads LGHGQFGYT. The active-site Proton acceptor is the Asp178. An autoinhibitory domain region spans residues 318–348; that stretch reads ASDIPLDISVLHNMRQFVKYSRFKQFALRAL. EF-hand domains follow at residues 355–390, 392–427, 434–469, and 472–499; these read EELSDLRDQFNAIDVDKNGTISLEELKQALAKDVPW, LKGPRVLEIVEAIDSNTDGLVDFEEFVAATLHVHQL, KWKSLSQAAFDKFDVDGDGYITSDELRMQTGLKGSI, and LLEEADIDRDGKISLDEFRRLLKTASMS. 19 residues coordinate Ca(2+): Asp368, Asp370, Asn372, Thr374, Glu379, Asp405, Asn407, Asp409, Glu416, Asp447, Asp449, Asp451, Tyr453, Glu458, Asp477, Asp479, Asp481, Lys483, and Glu488.

It belongs to the protein kinase superfamily. Ser/Thr protein kinase family. CDPK subfamily. As to quaternary structure, interacts with MPK5. Autophosphorylated. Phosphorylated by MPK5.

Its subcellular location is the cell membrane. It carries out the reaction L-seryl-[protein] + ATP = O-phospho-L-seryl-[protein] + ADP + H(+). The catalysed reaction is L-threonyl-[protein] + ATP = O-phospho-L-threonyl-[protein] + ADP + H(+). Activated by calcium. Autophosphorylation may play an important role in the regulation of the kinase activity. May play a role in signal transduction pathways that involve calcium as a second messenger. Functions upstream of MPK5 in a signaling pathway that represses defense gene expression and negatively regulates resistance to rice blast fungus. Phosphorylates MPK5 at Thr-14 and Thr-32 and activates MPK5 independently of MAP kinase kinase (MKK) phosphorylation. May be involved in arbuscular mycorrhizal presymbiotic phase signaling. Phosphorylates the elicitor-responsive protein ERG1 in vitro. Phosphorylation is calcium-dependent. This chain is Calcium-dependent protein kinase 18, found in Oryza sativa subsp. japonica (Rice).